We begin with the raw amino-acid sequence, 244 residues long: Uridylate kinase (244 aa).

17-20 (KLSG) lines the ATP pocket. Glycine 59 provides a ligand contact to UMP. Residues glycine 60 and arginine 64 each contribute to the ATP site. Residues aspartate 79 and 140–147 (TGNPFFTT) contribute to the UMP site. Threonine 167, tyrosine 173, and aspartate 176 together coordinate ATP.

It belongs to the UMP kinase family. Homohexamer.

The protein localises to the cytoplasm. It catalyses the reaction UMP + ATP = UDP + ADP. The protein operates within pyrimidine metabolism; CTP biosynthesis via de novo pathway; UDP from UMP (UMPK route): step 1/1. Inhibited by UTP. In terms of biological role, catalyzes the reversible phosphorylation of UMP to UDP. This chain is Uridylate kinase, found in Hahella chejuensis (strain KCTC 2396).